A 181-amino-acid chain; its full sequence is MSNTNNIQEEWTEMVEEMNNAVADSMEQNMKAQAAFVESWADAVEDTIPEQDDLADGMDGYNRAYEEWMDAAEQMVERSTDAAQGEDVDPAEFRDIWLQSANEAFKHVMGTSAFAAANGQLVESMMEMQQEADDLSQDTLEQLGFPTRNDVDEIAERLIELERRQHAVEQKLDRVLEHLEE.

This sequence belongs to the PHA/PHB synthase family. As to quaternary structure, heterodimer with PhaC.

It participates in biopolymer metabolism; poly-(R)-3-hydroxybutanoate biosynthesis. Its function is as follows. Involved in the production of polyhydroxyalkonic acids (PHAs), which are water-insoluble biopolymers used as intracellular energy reserve material when cells grow under conditions of nutrient limitation. PHAs are composed primarily of 3-hydroxybutyric acid (3HB) and 3-hydroxyvaleric acid (3HV). Required for the production of poly-beta-hydroxybutyrate (PHB) and poly(beta-hydroxybutyrate-co-beta-hydroxyvalerate) (PHBV). The protein is Poly(3-hydroxyalkanoate) polymerase subunit PhaE (phaE) of Haloarcula marismortui (strain ATCC 43049 / DSM 3752 / JCM 8966 / VKM B-1809) (Halobacterium marismortui).